The following is a 503-amino-acid chain: Alpha-1,3/1,6-mannosyltransferase ALG2 (503 aa).

Helical transmembrane passes span 64–84 (VYGD…FATI) and 112–132 (TCIP…CHFP). Residues N170, N303, N371, and N400 are each glycosylated (N-linked (GlcNAc...) asparagine). Residues 443-463 (WEIFGISFSNFILHMAFIKIL) traverse the membrane as a helical segment.

It belongs to the glycosyltransferase group 1 family. Glycosyltransferase 4 subfamily. Interacts with ALG1.

Its subcellular location is the endoplasmic reticulum membrane. It carries out the reaction a beta-D-Man-(1-&gt;4)-beta-D-GlcNAc-(1-&gt;4)-alpha-D-GlcNAc-diphospho-di-trans,poly-cis-dolichol + GDP-alpha-D-mannose = an alpha-D-Man-(1-&gt;3)-beta-D-Man-(1-&gt;4)-beta-D-GlcNAc-(1-&gt;4)-alpha-D-GlcNAc-diphospho-di-trans,poly-cis-dolichol + GDP + H(+). The enzyme catalyses an alpha-D-Man-(1-&gt;3)-beta-D-Man-(1-&gt;4)-beta-D-GlcNAc-(1-&gt;4)-alpha-D-GlcNAc-diphospho-di-trans,poly-cis-dolichol + GDP-alpha-D-mannose = an alpha-D-Man-(1-&gt;3)-[alpha-D-Man-(1-&gt;6)]-beta-D-Man-(1-&gt;4)-beta-D-GlcNAc-(1-&gt;4)-alpha-D-GlcNAc-diphospho-di-trans,poly-cis-dolichol + GDP + H(+). Its pathway is protein modification; protein glycosylation. Its function is as follows. Mannosylates Man(2)GlcNAc(2)-dolichol diphosphate and Man(1)GlcNAc(2)-dolichol diphosphate to form Man(3)GlcNAc(2)-dolichol diphosphate. The sequence is that of Alpha-1,3/1,6-mannosyltransferase ALG2 (ALG2) from Saccharomyces cerevisiae (strain ATCC 204508 / S288c) (Baker's yeast).